A 1221-amino-acid polypeptide reads, in one-letter code: DNA replication helicase (1221 aa).

The Nuclear localization signal signature appears at 692-701 (PKCKCYKKIK). Residue 917–924 (GEPGSGKS) coordinates ATP. The H-T-H motif DNA-binding region spans 967–981 (INELKQCSESYFKKH).

As to quaternary structure, interacts with IE1 and LEF-3.

The protein localises to the host nucleus. The enzyme catalyses ATP + H2O = ADP + phosphate + H(+). In terms of biological role, essential for initiation of viral DNA replication, it may contribute to other functions such as controlling the switch to the late phase and leading to the inhibition of host protein synthesis. Required for late and very late gene expression. The sequence is that of DNA replication helicase (HELI) from Lepidoptera (butterflies and moths).